A 281-amino-acid chain; its full sequence is ATP synthase gamma chain (281 aa).

It belongs to the ATPase gamma chain family. In terms of assembly, F-type ATPases have 2 components, CF(1) - the catalytic core - and CF(0) - the membrane proton channel. CF(1) has five subunits: alpha(3), beta(3), gamma(1), delta(1), epsilon(1). CF(0) has three main subunits: a, b and c.

It is found in the cell membrane. Functionally, produces ATP from ADP in the presence of a proton gradient across the membrane. The gamma chain is believed to be important in regulating ATPase activity and the flow of protons through the CF(0) complex. The protein is ATP synthase gamma chain of Mesoplasma florum (strain ATCC 33453 / NBRC 100688 / NCTC 11704 / L1) (Acholeplasma florum).